Consider the following 480-residue polypeptide: MSPQTETKASVGFKAGVKDYKLTYYTPQYKPLDTDILAAFRVTPQPGVPSEEAGAAVAAESSTGTWTTVWTDGLTSLDRYKGRCYHIDPVPGEENQYICYVAYPLDLFEEGSVTNMFTSIVGNVFGFKALRALRLEDLRVPISYIKTFQGPPHGIQVERDKLNKYGRPLLGCTIKPKLGLSAKNYGRAVYECLRGGLDFTKDDENVNSQPFMRWRDRFLFCAEALFKSQAETGEIKGHYLNATAGTCEEMMKRAVFARELGAPIVMHDYLTGGFTANTTLAHYCRDNGLLLHIHRAMHAVIDMQKNHGMQFRVLAKALRLSGGDHIHAGTVVGKLEGERDITLGFVDLLRDDHTEIDPDRGIYFTQSWVSTPGVLPVASGGIHVWHMPALTEIFGDDSVLQFGGGTLGHPWGNAPGAVANRVALEACVQARNEGRDLAREGATIIREASKWSPELAAACEVWKEIKFEFPAVDILDKKKS.

The propeptide occupies 1 to 2 (MS). N-acetylproline is present on proline 3. Position 14 is an N6,N6,N6-trimethyllysine (lysine 14). 2 residues coordinate substrate: asparagine 123 and threonine 173. The Proton acceptor role is filled by lysine 175. Lysine 177 is a binding site for substrate. Mg(2+)-binding residues include lysine 201, aspartate 203, and glutamate 204. At lysine 201 the chain carries N6-carboxylysine. Catalysis depends on histidine 294, which acts as the Proton acceptor. Substrate is bound by residues arginine 295, histidine 327, and serine 379.

The protein belongs to the RuBisCO large chain family. Type I subfamily. As to quaternary structure, heterohexadecamer of 8 large chains and 8 small chains; disulfide-linked. The disulfide link is formed within the large subunit homodimers. It depends on Mg(2+) as a cofactor. The disulfide bond which can form in the large chain dimeric partners within the hexadecamer appears to be associated with oxidative stress and protein turnover.

Its subcellular location is the plastid. It localises to the chloroplast. It carries out the reaction 2 (2R)-3-phosphoglycerate + 2 H(+) = D-ribulose 1,5-bisphosphate + CO2 + H2O. It catalyses the reaction D-ribulose 1,5-bisphosphate + O2 = 2-phosphoglycolate + (2R)-3-phosphoglycerate + 2 H(+). RuBisCO catalyzes two reactions: the carboxylation of D-ribulose 1,5-bisphosphate, the primary event in carbon dioxide fixation, as well as the oxidative fragmentation of the pentose substrate in the photorespiration process. Both reactions occur simultaneously and in competition at the same active site. The protein is Ribulose bisphosphate carboxylase large chain of Rivina humilis (Rougeplant).